The primary structure comprises 507 residues: MQQAIEQTATGGALRFNGICKVFPGVKALSDISFEARPGSVHALMGENGAGKSTLLKILGGSYQPNSGTLQIGEHSYQFKSTAESIAAGVAVIHQELHLVPEMTVAENLLLGHMPNRFGLINRGAMYRRAGELLKGLADEIDPRTRLGDLSLGQRQLVEIAKAMSRNAHVIAFDEPTSSLSAREIDRLMAIIVRLRDEGRVILYVSHRMEEIFRVCDAVTVFKDGRFVKTFEQMADLDHDRLVTCMVGRDIQDIYNYRPRQHQGPSLRVTGLLGLGLQEPVSFAVQKGEVLGFFGLVGAGRTELFRILSGLTRSTAGSLQLDGQPLTLKSPRDAIAAGVLLCPEDRKKEGIVPLSSVAENINIGARPRHVNLGCLIQGGWERDNARAQIKSMNVKTPSPEQQIMFLSGGNQQKAILGRWLSMPMKVLLLDEPTRGIDVGAKSEIYEIIHTLAADGIAVIVVSSDLMEVMGISDRILVMSEGAITGELNRDEADESRLLQLALPRTRG.

2 consecutive ABC transporter domains span residues 14–249 (LRFN…MVGR) and 249–505 (RDIQ…LPRT). Position 46-53 (46-53 (GENGAGKS)) interacts with ATP.

It belongs to the ABC transporter superfamily. Arabinose importer (TC 3.A.1.2.2) family. As to quaternary structure, the complex is composed of two ATP-binding proteins (AraG), two transmembrane proteins (AraH) and a solute-binding protein (AraF).

It localises to the cell inner membrane. It catalyses the reaction L-arabinose(out) + ATP + H2O = L-arabinose(in) + ADP + phosphate + H(+). In terms of biological role, part of the ABC transporter complex AraFGH involved in arabinose import. Responsible for energy coupling to the transport system. The sequence is that of Arabinose import ATP-binding protein AraG from Pseudomonas syringae pv. tomato (strain ATCC BAA-871 / DC3000).